Reading from the N-terminus, the 337-residue chain is B1 bradykinin receptor (337 aa).

Topologically, residues 1–41 (MASEVLLELQPSNRSLQAPANITSCESALEDWDLLYRVLPG) are extracellular. Residues asparagine 13 and asparagine 21 are each glycosylated (N-linked (GlcNAc...) asparagine). A helical membrane pass occupies residues 42–62 (FVITICFFGLLGNLLVLSFFL). The Cytoplasmic portion of the chain corresponds to 63-83 (LPWRQWWWQQRQRQQRLTIAE). A helical transmembrane segment spans residues 84–104 (IYLANLAASDLVFVLGLPFWA). The Extracellular portion of the chain corresponds to 105-121 (ENIGNRFNWPFGTDLCR). Cysteine 120 and cysteine 199 are disulfide-bonded. Residues 122 to 142 (VVSGVIKANLFVSIFLVVAIS) form a helical membrane-spanning segment. Residues 143 to 164 (QDRYRLLVYPMTSWGYRRRRQA) lie on the Cytoplasmic side of the membrane. The chain crosses the membrane as a helical span at residues 165-185 (QATCLLIWVAGGLLSIPTFLL). The Extracellular segment spans residues 186 to 217 (RSVKVVPDLNVSACILLFPHEAWHFARMVELN). The N-linked (GlcNAc...) asparagine glycan is linked to asparagine 195. Residues 218–238 (VLGFLLPVTAIIFFNYHILAS) traverse the membrane as a helical segment. Topologically, residues 239–261 (LRGQKEASRTRCGGPKGSKTTGL) are cytoplasmic. A helical transmembrane segment spans residues 262 to 282 (ILTLVASFLVCWCPYHFFAFL). The Extracellular segment spans residues 283–305 (DFLVQVRVIQDCSWKEITDLGLQ). The helical transmembrane segment at 306 to 326 (LANFFAFVNSCLNPLIYVFAG) threads the bilayer. The Cytoplasmic segment spans residues 327–337 (RLLKTRVLGTL).

This sequence belongs to the G-protein coupled receptor 1 family. Bradykinin receptor subfamily. BDKRB1 sub-subfamily. Expressed in bladder, lung, duodenum, kidney, uterus, thymus, salivary gland, testis, prostate, macrophages, aorta, spleen and heart.

It is found in the cell membrane. In terms of biological role, this is a receptor for bradykinin. Could be a factor in chronic pain and inflammation. This chain is B1 bradykinin receptor (Bdkrb1), found in Rattus norvegicus (Rat).